The sequence spans 71 residues: UPF0346 protein BCQ_2236 (71 aa).

Belongs to the UPF0346 family.

The sequence is that of UPF0346 protein BCQ_2236 from Bacillus cereus (strain Q1).